The primary structure comprises 538 residues: MFRRNIITSAILLMAPLAFSAQSLAESLTVEQRLELLEKALRETQSELKKYKDEEKKKYTPATVNRSVSTNDQGYAANPFPTSHAAKPDAVLVKNEEKNASETGSIYSSMTLKDFSKFVKDEIGFSYNGYYRSGWGTASHGSPKSWAIGSLGRFGNEYSGWFDLQLKQRVYNENGKRVDAIVMMDGNVGQQYSTGWFGDNAGGENFMQFSDMYVTTKGFLPFAPEADFWVGKHGAPKIEIQMLDWKTQRTDAAAGVGLENWKVGPGKIDIALVREDVDDYDRSLQNKQQINTNTIDLRYKDIPLWDKATLMVSGRYVSANESASEKDNQDNNGYYDWKDTWMFGTSLTQKFDKGGFNEFSFLVANNSIASNFGRYAGASPFTTFNGRYYGDHTGGTAVRLTSQGEAYIGDHFIVANAIVYSFGNDIYSYETGAHSDFESIRAVVRPAYIWDQYNQTGVELGYFTQQNKDANSNKYNESGYKTTLFHTFKVNTSMLTSRPEIRFYTTYIKALENELDGFTFEDNKDDQFAVGAQAEIWW.

Residues 1–25 form the signal peptide; sequence MFRRNIITSAILLMAPLAFSAQSLA.

The protein belongs to the porin LamB (TC 1.B.3) family.

The protein localises to the cell outer membrane. Its function is as follows. May be a sugar porin with a broad carbohydrate specificity. The protein is Putative outer membrane porin BglH (bglH) of Escherichia coli O6:K15:H31 (strain 536 / UPEC).